A 651-amino-acid chain; its full sequence is Bromodomain-containing protein 7 (651 aa).

Lys21 is covalently cross-linked (Glycyl lysine isopeptide (Lys-Gly) (interchain with G-Cter in SUMO2)). The segment covering 35–45 (TELSTGSSGHD) has biased composition (polar residues). The interval 35 to 132 (TELSTGSSGH…SSLAKQEEVE (98 aa)) is disordered. Basic and acidic residues predominate over residues 47–57 (SLFEDKNDHDK). Lys52 is covalently cross-linked (Glycyl lysine isopeptide (Lys-Gly) (interchain with G-Cter in SUMO2)). Basic residues predominate over residues 58–69 (HKDRKRKKRKKG). Positions 65-96 (KRKKGEKQIPGEEKGRKRRRVKEDKKKRDRDR) match the Nuclear localization signal motif. Basic and acidic residues predominate over residues 70–106 (EKQIPGEEKGRKRRRVKEDKKKRDRDRVENEAEKDLQ). Residues Lys127, Lys186, Lys197, Lys201, Lys212, and Lys241 each participate in a glycyl lysine isopeptide (Lys-Gly) (interchain with G-Cter in SUMO2) cross-link. The 105-residue stretch at 131 to 235 (VEQTPLQEAL…HSGMKILSQE (105 aa)) folds into the Bromo domain. The disordered stretch occupies residues 253–312 (TRKQKDGTDTSQSGEDGGCWQREREDSGDAEAHASKSPSKENKKKDNDMLEDKFKSNNLE). The segment covering 273–312 (QREREDSGDAEAHASKSPSKENKKKDNDMLEDKFKSNNLE) has biased composition (basic and acidic residues). 2 positions are modified to phosphoserine: Ser279 and Ser289. Residues Lys305 and Lys307 each participate in a glycyl lysine isopeptide (Lys-Gly) (interchain with G-Cter in SUMO2) cross-link. Position 328 is an N6-acetyllysine (Lys328). Lys344 participates in a covalent cross-link: Glycyl lysine isopeptide (Lys-Gly) (interchain with G-Cter in SUMO2). Ser380 carries the post-translational modification Phosphoserine. Residue Lys389 forms a Glycyl lysine isopeptide (Lys-Gly) (interchain with G-Cter in SUMO2) linkage. Ser482 carries the phosphoserine modification. Position 514 is a phosphothreonine (Thr514). Positions 536–567 (SEEAEIFQKKLDETTRLLRELQEAQNERLSTR) form a coiled coil. Ser621 is modified (phosphoserine).

Interacts with TRIM24, PTPN13 and DVL1. Identified in a complex with SMARCA4/BRG1, SMARCC1/BAF155, SMARCE1/BAF57, DPF2/BAF45D and ARID2, subunits of the SWI/SNF-B (PBAF) chromatin remodeling complex. Interacts with IRF2 and HNRPUL1. Interacts (via N-terminus) with TP53. Interacts (via C-terminus) with EP300. Interacts with BRCA1. Interacts (via bromo domain) with histone H3 (via N-terminus) acetylated at 'Lys-14' (H3K14ac). Has low affinity for histone H3 acetylated at 'Lys-9' (H3K9ac). Has the highest affinity for histone H3 that is acetylated both at 'Lys-9' (H3K9ac) and at 'Lys-14' (H3K14ac). Has very low affinity for non-acetylated histone H3. Interacts (via bromo domain) with histone H4 (via N-terminus) acetylated at 'Lys-8' (H3K8ac) (in vitro).

It is found in the nucleus. The protein resides in the chromosome. Acts both as coactivator and as corepressor. May play a role in chromatin remodeling. Activator of the Wnt signaling pathway in a DVL1-dependent manner by negatively regulating the GSK3B phosphotransferase activity. Induces dephosphorylation of GSK3B at 'Tyr-216'. Down-regulates TRIM24-mediated activation of transcriptional activation by AR. Transcriptional corepressor that down-regulates the expression of target genes. Binds to target promoters, leading to increased histone H3 acetylation at 'Lys-9' (H3K9ac). Binds to the ESR1 promoter. Recruits BRCA1 and POU2F1 to the ESR1 promoter. Coactivator for TP53-mediated activation of transcription of a set of target genes. Required for TP53-mediated cell-cycle arrest in response to oncogene activation. Promotes acetylation of TP53 at 'Lys-382', and thereby promotes efficient recruitment of TP53 to target promoters. Inhibits cell cycle progression from G1 to S phase. This is Bromodomain-containing protein 7 (BRD7) from Pongo abelii (Sumatran orangutan).